A 213-amino-acid polypeptide reads, in one-letter code: Large ribosomal subunit protein mL67 (213 aa).

Belongs to the mitochondrion-specific ribosomal protein mL67 family.

Its subcellular location is the nucleus. The protein resides in the mitochondrion. Transcription factor involved in regulation of RNA polymerase II-dependent transcription. Also involved in regulation of mitochondrial DNA recombination, maintenance and repair, and generation of homoplasmic cells. The protein is Large ribosomal subunit protein mL67 (MHR1) of Eremothecium gossypii (strain ATCC 10895 / CBS 109.51 / FGSC 9923 / NRRL Y-1056) (Yeast).